Consider the following 482-residue polypeptide: UDP-glycosyltransferase 1 (482 aa).

Residue Asn-243 is glycosylated (N-linked (GlcNAc...) asparagine). The helical transmembrane segment at 450–470 threads the bilayer; sequence IYLVYALVLGSAWWIGKTILG.

It belongs to the glycosyltransferase 28 family.

It localises to the membrane. The catalysed reaction is exophillate aglycone + UDP-alpha-D-glucose = exophillate + UDP + H(+). Its pathway is secondary metabolite biosynthesis. Functionally, acts as a depside 2-O-glucosyltransferase that catalyzes the first glycosylation step during phaeomoniecin D biosynthesis by producing the intermediate exophillic acid which is further O-galactosylated into phaeomoniecin D by the C-galactosyltransferase OGT2. In Phaeomoniella chlamydospora (Phaeoacremonium chlamydosporum), this protein is UDP-glycosyltransferase 1.